A 610-amino-acid polypeptide reads, in one-letter code: Sterol O-acyltransferase 1 (610 aa).

Residues S21 and S45 each carry the phosphoserine modification. The interval 41 to 81 (SMEVSPRSSTTSLVEPVESTEGVESTEAERVAGKQEQEEEY) is disordered. A compositionally biased stretch (basic and acidic residues) spans 67–76 (EAERVAGKQE). Transmembrane regions (helical) follow at residues 182 to 202 (LESN…WIAI), 229 to 249 (LFTI…VVFV), 264 to 284 (GFVA…PIYV), 371 to 391 (ISCS…QINY), and 409 to 429 (IIGT…PVAM). The FYXDWWN motif signature appears at 491–497 (FYGDWWN). Transmembrane regions (helical) follow at residues 535–555 (ATLF…FAIF) and 590–610 (VVFS…YLTL). The active site involves H547.

Belongs to the membrane-bound acyltransferase family. Sterol o-acyltransferase subfamily.

It localises to the endoplasmic reticulum membrane. It catalyses the reaction lanosterol + an acyl-CoA = lanosteryl ester + CoA. In terms of biological role, sterol O-acyltransferase that catalyzes the formation of stery esters. In Saccharomyces cerevisiae (strain ATCC 204508 / S288c) (Baker's yeast), this protein is Sterol O-acyltransferase 1.